We begin with the raw amino-acid sequence, 61 residues long: Potassium channel toxin alpha-KTx 15.6 (61 aa).

A signal peptide spans 1 to 23 (MKAFYGMLVIFILCSTCYISVDS). The residue at position 24 (Gln24) is a Pyrrolidone carboxylic acid. Cystine bridges form between Cys31-Cys52, Cys37-Cys57, and Cys41-Cys59.

It belongs to the short scorpion toxin superfamily. Potassium channel inhibitor family. Alpha-KTx 15 subfamily. In terms of tissue distribution, expressed by the venom gland.

It localises to the secreted. Its function is as follows. Irreversibly blocks the A-type voltage-gated potassium channels in rat cerebellum granular cells (190 nM induce 50% inhibitory effect) (IC(50)=190 nM). Also weakly inhibits Kv1.2/KCNA2 and Kv1.3/KCNA3. This Tityus discrepans (Venezuelan scorpion) protein is Potassium channel toxin alpha-KTx 15.6.